We begin with the raw amino-acid sequence, 358 residues long: Uroporphyrinogen decarboxylase (358 aa).

Substrate contacts are provided by residues 29–33 (RQAGR), Asp-79, Tyr-156, Thr-211, and His-329.

Belongs to the uroporphyrinogen decarboxylase family. In terms of assembly, homodimer.

It localises to the cytoplasm. The enzyme catalyses uroporphyrinogen III + 4 H(+) = coproporphyrinogen III + 4 CO2. The protein operates within porphyrin-containing compound metabolism; protoporphyrin-IX biosynthesis; coproporphyrinogen-III from 5-aminolevulinate: step 4/4. Catalyzes the decarboxylation of four acetate groups of uroporphyrinogen-III to yield coproporphyrinogen-III. The protein is Uroporphyrinogen decarboxylase of Idiomarina loihiensis (strain ATCC BAA-735 / DSM 15497 / L2-TR).